Consider the following 437-residue polypeptide: Trigger factor (437 aa).

The 86-residue stretch at 163–248 (DDRVTVDFEG…VKKIEASHLP (86 aa)) folds into the PPIase FKBP-type domain.

The protein belongs to the FKBP-type PPIase family. Tig subfamily.

It is found in the cytoplasm. It carries out the reaction [protein]-peptidylproline (omega=180) = [protein]-peptidylproline (omega=0). Involved in protein export. Acts as a chaperone by maintaining the newly synthesized protein in an open conformation. Functions as a peptidyl-prolyl cis-trans isomerase. The sequence is that of Trigger factor from Variovorax paradoxus (strain S110).